Reading from the N-terminus, the 332-residue chain is Probable cation efflux system protein MT2084 (332 aa).

5 consecutive transmembrane segments (helical) span residues 46–66 (ISLL…VMSG), 75–95 (IHNF…ALGA), 113–133 (AGSF…YEAI), 145–165 (VGWV…VALY), and 202–222 (VALG…AAIL).

This sequence belongs to the cation diffusion facilitator (CDF) transporter (TC 2.A.4) family.

It localises to the cell membrane. This is Probable cation efflux system protein MT2084 from Mycobacterium tuberculosis (strain CDC 1551 / Oshkosh).